A 321-amino-acid chain; its full sequence is Lipoyl synthase (321 aa).

Residues C68, C73, C79, C94, C98, C101, and S308 each contribute to the [4Fe-4S] cluster site. Positions 80–297 (FNHGTATFMI…KEVALELGFT (218 aa)) constitute a Radical SAM core domain.

It belongs to the radical SAM superfamily. Lipoyl synthase family. Requires [4Fe-4S] cluster as cofactor.

It localises to the cytoplasm. The enzyme catalyses [[Fe-S] cluster scaffold protein carrying a second [4Fe-4S](2+) cluster] + N(6)-octanoyl-L-lysyl-[protein] + 2 oxidized [2Fe-2S]-[ferredoxin] + 2 S-adenosyl-L-methionine + 4 H(+) = [[Fe-S] cluster scaffold protein] + N(6)-[(R)-dihydrolipoyl]-L-lysyl-[protein] + 4 Fe(3+) + 2 hydrogen sulfide + 2 5'-deoxyadenosine + 2 L-methionine + 2 reduced [2Fe-2S]-[ferredoxin]. Its pathway is protein modification; protein lipoylation via endogenous pathway; protein N(6)-(lipoyl)lysine from octanoyl-[acyl-carrier-protein]: step 2/2. In terms of biological role, catalyzes the radical-mediated insertion of two sulfur atoms into the C-6 and C-8 positions of the octanoyl moiety bound to the lipoyl domains of lipoate-dependent enzymes, thereby converting the octanoylated domains into lipoylated derivatives. This chain is Lipoyl synthase, found in Vibrio parahaemolyticus serotype O3:K6 (strain RIMD 2210633).